We begin with the raw amino-acid sequence, 125 residues long: UPF0593 mitochondrial protein C806.05 (125 aa).

It belongs to the UPF0593 family.

It is found in the mitochondrion. This Schizosaccharomyces pombe (strain 972 / ATCC 24843) (Fission yeast) protein is UPF0593 mitochondrial protein C806.05.